The chain runs to 337 residues: Holliday junction branch migration complex subunit RuvB (337 aa).

Residues 4–184 (ADRLIEPIAS…FGIVQRLEFY (181 aa)) are large ATPase domain (RuvB-L). ATP contacts are provided by residues I23, R24, G65, K68, T69, T70, 131–133 (EDY), R174, Y184, and R221. Position 69 (T69) interacts with Mg(2+). The segment at 185 to 255 (NVADLSTIVS…TAAAALDMLE (71 aa)) is small ATPAse domain (RuvB-S). Positions 258 to 337 (SEGFDIMDRK…FGITKDQTKD (80 aa)) are head domain (RuvB-H). DNA contacts are provided by R294, R313, and R318.

Belongs to the RuvB family. As to quaternary structure, homohexamer. Forms an RuvA(8)-RuvB(12)-Holliday junction (HJ) complex. HJ DNA is sandwiched between 2 RuvA tetramers; dsDNA enters through RuvA and exits via RuvB. An RuvB hexamer assembles on each DNA strand where it exits the tetramer. Each RuvB hexamer is contacted by two RuvA subunits (via domain III) on 2 adjacent RuvB subunits; this complex drives branch migration. In the full resolvosome a probable DNA-RuvA(4)-RuvB(12)-RuvC(2) complex forms which resolves the HJ.

The protein resides in the cytoplasm. It carries out the reaction ATP + H2O = ADP + phosphate + H(+). Its function is as follows. The RuvA-RuvB-RuvC complex processes Holliday junction (HJ) DNA during genetic recombination and DNA repair, while the RuvA-RuvB complex plays an important role in the rescue of blocked DNA replication forks via replication fork reversal (RFR). RuvA specifically binds to HJ cruciform DNA, conferring on it an open structure. The RuvB hexamer acts as an ATP-dependent pump, pulling dsDNA into and through the RuvAB complex. RuvB forms 2 homohexamers on either side of HJ DNA bound by 1 or 2 RuvA tetramers; 4 subunits per hexamer contact DNA at a time. Coordinated motions by a converter formed by DNA-disengaged RuvB subunits stimulates ATP hydrolysis and nucleotide exchange. Immobilization of the converter enables RuvB to convert the ATP-contained energy into a lever motion, pulling 2 nucleotides of DNA out of the RuvA tetramer per ATP hydrolyzed, thus driving DNA branch migration. The RuvB motors rotate together with the DNA substrate, which together with the progressing nucleotide cycle form the mechanistic basis for DNA recombination by continuous HJ branch migration. Branch migration allows RuvC to scan DNA until it finds its consensus sequence, where it cleaves and resolves cruciform DNA. The protein is Holliday junction branch migration complex subunit RuvB of Colwellia psychrerythraea (strain 34H / ATCC BAA-681) (Vibrio psychroerythus).